The chain runs to 538 residues: Syncytin-1 (538 aa).

Residues 1–20 (MALPYHIFLFTVLLPSFTLT) form the signal peptide. Residues 21 to 443 (APPPCRCMTS…NTGPWGLLSQ (423 aa)) lie on the Extracellular side of the membrane. Asn169 is a glycosylation site (N-linked (GlcNAc...) asparagine). The CXXC signature appears at 186-189 (CWIC). Cystine bridges form between Cys186–Cys189, Cys186–Cys405, and Cys397–Cys404. Asn208, Asn214, Asn234, Asn242, and Asn281 each carry an N-linked (GlcNAc...) asparagine glycan. Residues 320-340 (ILPFVIGAGVLGALGTGIGGI) are fusion peptide. Positions 380–396 (LQNRRALDLLTAERGGT) are immunosuppression. Positions 397-405 (CLFLGEECC) match the CX6CC motif. Residue Asn409 is glycosylated (N-linked (GlcNAc...) asparagine). A helical membrane pass occupies residues 444–464 (WMPWILPFLGPLAAIILLLLF). Residues 465 to 484 (GPCIFNLLVNFVSSRIEAVK) are essential for the fusiogenic function. At 465 to 538 (GPCIFNLLVN…LLRPNSAGSS (74 aa)) the chain is on the cytoplasmic side. Positions 496–538 (KIYRRPLDRPASPRSDVNDIKGTPPEEILTAQPLLRPNSAGSS) are disordered.

The protein belongs to the gamma type-C retroviral envelope protein family. HERV class-I W env subfamily. The mature envelope protein (Env) consists of a trimer of SU-TM heterodimers attached probably by a labile interchain disulfide bond. Interacts with the C-type lectin CD209/DC-SIGN. Specific enzymatic cleavages in vivo yield mature proteins. Envelope glycoproteins are synthesized as an inactive precursor that is heavily N-glycosylated and processed likely by furin in the Golgi to yield the mature SU and TM proteins. The cleavage site between SU and TM requires the minimal sequence [KR]-X-[KR]-R. In terms of processing, the CXXC motif is highly conserved across a broad range of retroviral envelope proteins. It is thought to participate in the formation of a labile disulfide bond possibly with the CX6CC motif present in the transmembrane protein.

It is found in the cell membrane. It localises to the virion. In terms of biological role, this endogenous retroviral envelope protein has retained its original fusogenic properties and participates in trophoblast fusion and the formation of a syncytium during placenta morphogenesis. May recognize and induce fusion through binding of SLC1A4 and SLC1A5. Endogenous envelope proteins may have kept, lost or modified their original function during evolution. Retroviral envelope proteins mediate receptor recognition and membrane fusion during early infection. The surface protein (SU) mediates receptor recognition, while the transmembrane protein (TM) acts as a class I viral fusion protein. The protein may have at least 3 conformational states: pre-fusion native state, pre-hairpin intermediate state, and post-fusion hairpin state. During viral and target cell membrane fusion, the coiled coil regions (heptad repeats) assume a trimer-of-hairpins structure, positioning the fusion peptide in close proximity to the C-terminal region of the ectodomain. The formation of this structure appears to drive apposition and subsequent fusion of membranes. The chain is Syncytin-1 (ERVW-1) from Pan troglodytes (Chimpanzee).